Here is a 270-residue protein sequence, read N- to C-terminus: L-fucose dehydrogenase (270 aa).

The NAD(+) site is built by Arg19, Ile21, Asp40, Lys41, Asp62, Val63, Asn89, Tyr154, Lys158, Ile187, Thr189, and Leu191. Residue Tyr154 is the Proton acceptor of the active site.

This sequence belongs to the short-chain dehydrogenases/reductases (SDR) family. Homotetramer. As to expression, highly expressed in brain, placenta, liver and kidney.

It localises to the cytoplasm. The catalysed reaction is L-fucose + NAD(+) = L-fucono-1,5-lactone + NADH + H(+). It carries out the reaction D-arabinose + NAD(+) = D-arabinono-1,5-lactone + NADH + H(+). It catalyses the reaction L-galactose + NAD(+) = L-galactono-1,5-lactone + NADH + H(+). Its pathway is carbohydrate degradation; L-fucose degradation. Functionally, catalyzes the NAD(+)-dependent oxidation of L-fucose, yielding L-fucono-1,5-lactone, which rapidly converts spontaneously to L-fucone-1,4-lactone. Can also act on D-arabinose and L-galactose, with lower catalytic efficiency. Does not use NADPH. May be the initial enzyme of the L-fucose degradation pathway in mammals. The polypeptide is L-fucose dehydrogenase (Homo sapiens (Human)).